Here is a 261-residue protein sequence, read N- to C-terminus: Guanine nucleotide exchange factor BopE (261 aa).

Belongs to the GEF (guanine exchange factor) SopE family. As to quaternary structure, monomer. Interacts with human CDC42.

The protein resides in the secreted. Activator for both CDC42 and RAC1 by directly interacting with these Rho GTPases and acting as a guanine nucleotide exchange factor (GEF). This activation results in actin cytoskeleton rearrangements and stimulates membrane ruffling, thus promoting bacterial entry into non-phagocytic cells. This is Guanine nucleotide exchange factor BopE (bopE) from Burkholderia mallei (strain NCTC 10247).